A 341-amino-acid polypeptide reads, in one-letter code: L-threonine 3-dehydrogenase (341 aa).

Cys38 is a Zn(2+) binding site. Catalysis depends on charge relay system residues Thr40 and His43. Zn(2+) is bound by residues His63, Glu64, Cys93, Cys96, Cys99, and Cys107. NAD(+) is bound by residues Ile175, Asp195, Arg200, 262–264 (LGI), and 286–287 (IY).

This sequence belongs to the zinc-containing alcohol dehydrogenase family. In terms of assembly, homotetramer. The cofactor is Zn(2+).

Its subcellular location is the cytoplasm. It catalyses the reaction L-threonine + NAD(+) = (2S)-2-amino-3-oxobutanoate + NADH + H(+). Its pathway is amino-acid degradation; L-threonine degradation via oxydo-reductase pathway; glycine from L-threonine: step 1/2. Its function is as follows. Catalyzes the NAD(+)-dependent oxidation of L-threonine to 2-amino-3-ketobutyrate. The chain is L-threonine 3-dehydrogenase from Edwardsiella ictaluri (strain 93-146).